The primary structure comprises 983 residues: MDCQLSILLLLSCSVLDSFGELIPQPSNEVNLLDSKTIQGELGWISYPSHGWEEISGVDEHYTPIRTYQVCNVMDHSQNNWLRTNWVPRNSAQKIYVELKFTLRDCNSIPLVLGTCKETFNLYYMESDDDHGVKFREHQFTKIDTIAADESFTQMDLGDRILKLNTEIREVGPVNKKGFYLAFQDVGACVALVSVRVYFKKCPFTVKNLAMFPDTVPMDSQSLVEVRGSCVNNSKEEDPPRMYCSTEGEWLVPIGKCSCNAGYEERGFMCQACRPGFYKALDGNMKCAKCPPHSSTQEDGSMNCRCENNYFRADKDPPSMACTRPPSSPRNVISNINETSVILDWSWPLDTGGRKDVTFNIICKKCGWNIKQCEPCSPNVRFLPRQFGLTNTTVTVTDLLAHTNYTFEIDAVNGVSELSSPPRQFAAVSITTNQAAPSPVLTIKKDRTSRNSISLSWQEPEHPNGIILDYEVKYYEKQEQETSYTILRARGTNVTISSLKPDTIYVFQIRARTAAGYGTNSRKFEFETSPDSFSISGESSQVVMIAISAAVAIILLTVVIYVLIGRFCGYKSKHGADEKRLHFGNGHLKLPGLRTYVDPHTYEDPTQAVHEFAKELDATNISIDKVVGAGEFGEVCSGRLKLPSKKEISVAIKTLKVGYTEKQRRDFLGEASIMGQFDHPNIIRLEGVVTKSKPVMIVTEYMENGSLDSFLRKHDAQFTVIQLVGMLRGIASGMKYLSDMGYVHRDLAARNILINSNLVCKVSDFGLSRVLEDDPEAAYTTRGGKIPIRWTSPEAIAYRKFTSASDVWSYGIVLWEVMSYGERPYWEMSNQDVIKAVDEGYRLPPPMDCPAALYQLMLDCWQKDRNNRPKFEQIVSILDKLIRNPGSLKIITSAAARPSNLLLDQSNVDITTFRTTGDWLNGVWTAHCKEIFTGVEYSSCDTIAKISTDDMKKVGVTVVGPQKKIISSIKALETQSKNGPVPV.

An N-terminal signal peptide occupies residues 1-20 (MDCQLSILLLLSCSVLDSFG). Residues 21-541 (ELIPQPSNEV…SFSISGESSQ (521 aa)) are Extracellular-facing. In terms of domain architecture, Eph LBD spans 29 to 207 (EVNLLDSKTI…YFKKCPFTVK (179 aa)). Residues Asn-232, Asn-337, Asn-391, Asn-404, and Asn-493 are each glycosylated (N-linked (GlcNAc...) asparagine). 2 Fibronectin type-III domains span residues 325–435 (PPSS…TNQA) and 436–531 (APSP…TSPD). A helical membrane pass occupies residues 542 to 565 (VVMIAISAAVAIILLTVVIYVLIG). The Cytoplasmic segment spans residues 566–983 (RFCGYKSKHG…TQSKNGPVPV (418 aa)). 2 positions are modified to phosphotyrosine; by autocatalysis: Tyr-596 and Tyr-602. Positions 621 to 882 (ISIDKVVGAG…QIVSILDKLI (262 aa)) constitute a Protein kinase domain. ATP is bound by residues 628-633 (GAGEFG), Lys-653, and 700-706 (EYMENGS). Position 701 is a phosphotyrosine; by autocatalysis (Tyr-701). Asp-746 (proton acceptor) is an active-site residue. Residue 750 to 751 (RN) participates in ATP binding. A Phosphotyrosine; by autocatalysis modification is found at Tyr-779. Positions 911 to 975 (TTFRTTGDWL…ISSIKALETQ (65 aa)) constitute an SAM domain. A Phosphotyrosine modification is found at Tyr-937. Positions 981-983 (VPV) match the PDZ-binding motif.

It belongs to the protein kinase superfamily. Tyr protein kinase family. Ephrin receptor subfamily. As to quaternary structure, heterotetramer upon binding of the ligand. The heterotetramer is composed of an ephrin dimer and a receptor dimer. Oligomerization is probably required to induce biological responses. Forms a ternary EFNA5-EPHA3-ADAM10 complex mediating EFNA5 extracellular domain shedding by ADAM10 which regulates the EFNA5-EPHA3 complex internalization and function. Interacts with NCK1 (via SH2 domain); mediates EFNA5-EPHA3 signaling. Interacts (phosphorylated) with PTPN1; dephosphorylates EPHA3 and may regulate its trafficking and function. Interacts (phosphorylated) with CRK; mediates EFNA5-EPHA3 signaling through RHOA GTPase activation. In terms of processing, autophosphorylates upon activation by EFNA5. Phosphorylation on Tyr-602 mediates interaction with NCK1. Dephosphorylated by PTPN1. As to expression, widely expressed. Highest level in placenta.

The protein resides in the cell membrane. Its subcellular location is the secreted. The enzyme catalyses L-tyrosyl-[protein] + ATP = O-phospho-L-tyrosyl-[protein] + ADP + H(+). In terms of biological role, receptor tyrosine kinase which binds promiscuously membrane-bound ephrin family ligands residing on adjacent cells, leading to contact-dependent bidirectional signaling into neighboring cells. The signaling pathway downstream of the receptor is referred to as forward signaling while the signaling pathway downstream of the ephrin ligand is referred to as reverse signaling. Highly promiscuous for ephrin-A ligands it binds preferentially EFNA5. Upon activation by EFNA5 regulates cell-cell adhesion, cytoskeletal organization and cell migration. Plays a role in cardiac cells migration and differentiation and regulates the formation of the atrioventricular canal and septum during development probably through activation by EFNA1. Involved in the retinotectal mapping of neurons. May also control the segregation but not the guidance of motor and sensory axons during neuromuscular circuit development. The polypeptide is Ephrin type-A receptor 3 (EPHA3) (Homo sapiens (Human)).